Reading from the N-terminus, the 144-residue chain is Large ribosomal subunit protein uL16 (144 aa).

Belongs to the universal ribosomal protein uL16 family. Part of the 50S ribosomal subunit.

In terms of biological role, binds 23S rRNA and is also seen to make contacts with the A and possibly P site tRNAs. The protein is Large ribosomal subunit protein uL16 of Bacillus mycoides (strain KBAB4) (Bacillus weihenstephanensis).